The primary structure comprises 404 residues: BRCA1-A complex subunit Abraxas 1 (404 aa).

In terms of domain architecture, MPN spans 7–161; the sequence is YIRVSGFVLG…YAVYRSHGSQ (155 aa). Residues 219–268 are a coiled coil; it reads MNNSLQGELKMACKKVEESERLVEKLLADVSDLRRMVNERKQELREISAD. Positions 339-404 are disordered; that stretch reads GRLGRGGGTS…NLDVSNSPVF (66 aa). Residues 391 to 404 are compositionally biased toward polar residues; sequence RNGNNLDVSNSPVF. Ser401 bears the Phosphoserine mark. Positions 401–404 match the pSXXF motif motif; it reads SPVF.

Belongs to the FAM175 family. Abraxas subfamily. As to quaternary structure, component of the BRCA1-A complex. Component of the BRISC complex. Homodimer. Interacts directly (when phosphorylated at Ser-401) with brca1. The phosphorylated homodimer can interact directly with two brca1 chains, giving rise to a heterotetramer. Phosphorylation of Ser-401 of the pSXXF motif by ATM or ATR constitutes a specific recognition motif for the BRCT domain of BRCA1.

Its subcellular location is the nucleus. In terms of biological role, involved in DNA damage response and double-strand break (DSB) repair. Component of the BRCA1-A complex, acting as a central scaffold protein that assembles the various components of the complex and mediates the recruitment of brca1. The BRCA1-A complex specifically recognizes 'Lys-63'-linked ubiquitinated histones H2A and H2AX at DNA lesion sites, leading to target the brca1-bard1 heterodimer to sites of DNA damage at DSBs. This complex also possesses deubiquitinase activity that specifically removes 'Lys-63'-linked ubiquitin on histones H2A and H2AX. The sequence is that of BRCA1-A complex subunit Abraxas 1 from Salmo salar (Atlantic salmon).